The following is a 129-amino-acid chain: Small ribosomal subunit protein uS11 (129 aa).

It belongs to the universal ribosomal protein uS11 family. As to quaternary structure, part of the 30S ribosomal subunit. Interacts with proteins S7 and S18. Binds to IF-3.

In terms of biological role, located on the platform of the 30S subunit, it bridges several disparate RNA helices of the 16S rRNA. Forms part of the Shine-Dalgarno cleft in the 70S ribosome. The protein is Small ribosomal subunit protein uS11 of Oceanobacillus iheyensis (strain DSM 14371 / CIP 107618 / JCM 11309 / KCTC 3954 / HTE831).